The chain runs to 365 residues: MLVPQDMVTVQSKTIFQINKYYAEKVQVRMGNIALVLREICKIVQEVLREVEVQEPRFISSLVECNGRYEGLEVISPTAFEVVLYLNQMGVFNFVDDGSLPGAAVLKLSDGRKRSMSLWVEFITASGYLSARKIRSRFHTLVAQAVEKCPYRDMVKLVPDTTEVKLRIRERYTVQITPAFKCTGIWPRSAAHWPILNIPWPHPALVAEVKTEGFDLLSKESVILQGKNANVEGDAWLLHFTEAENRLLQGGYRKRCLSILKTLCDRHLELPGVPIGYYHLKTLLLYECEKHPRETEWDAGCVADRLNGIFLQLISCLQCRRCPHYFLPSLDLFKGKSPTVLDNASKHVWRLCRDILTSSKAFDRL.

The protein belongs to the mab-21 family.

The polypeptide is Protein mab-21-like (Anopheles gambiae (African malaria mosquito)).